A 377-amino-acid chain; its full sequence is Pseudouridylate synthase RPUSD4, mitochondrial (377 aa).

Residues 1-46 constitute a mitochondrion transit peptide; that stretch reads MAAPCLRTPGVQLLSMSSRPGRLFTPGSWSFCSSATSSRPLNAQRL. Residue Asp153 is part of the active site.

It belongs to the pseudouridine synthase RluA family. In terms of assembly, interacts with 16S mt-rRNA, mt-tRNA(Phe) and mt-tRNA(Met). Forms a regulatory protein-RNA complex, consisting of RCC1L, NGRN, RPUSD3, RPUSD4, TRUB2, FASTKD2 and 16S mt-rRNA.

It localises to the mitochondrion matrix. The protein localises to the nucleus. It is found in the cytoplasm. The enzyme catalyses uridine in 5S rRNA = pseudouridine in 5S rRNA. The catalysed reaction is a uridine in tRNA = a pseudouridine in tRNA. It catalyses the reaction a uridine in mRNA = a pseudouridine in mRNA. Functionally, catalyzes uridine to pseudouridine isomerization (pseudouridylation) of different mitochondrial RNA substrates. Acts on position 1397 in 16S mitochondrial ribosomal RNA (16S mt-rRNA). This modification is required for the assembly of 16S mt-rRNA into a functional mitochondrial ribosome. As a component of a functional protein-RNA module, consisting of RCC1L, NGRN, RPUSD3, RPUSD4, TRUB2, FASTKD2 and 16S mt-rRNA, controls 16S mt-rRNA abundance and is required for intra-mitochondrial translation. Acts on position 39 in mitochondrial tRNA(Phe). Also catalyzes pseudouridylation of mRNAs in nucleus: acts as a regulator of pre-mRNA splicing by mediating pseudouridylation of pre-mRNAs at locations associated with alternatively spliced regions. Pseudouridylation of pre-mRNAs near splice sites directly regulates mRNA splicing and mRNA 3'-end processing. The chain is Pseudouridylate synthase RPUSD4, mitochondrial from Mus musculus (Mouse).